The following is a 340-amino-acid chain: Glycerol-3-phosphate dehydrogenase [NAD(P)+] (340 aa).

NADPH-binding residues include S14, F15, R35, and K108. Residues K108 and G136 each contribute to the sn-glycerol 3-phosphate site. A140 provides a ligand contact to NADPH. Sn-glycerol 3-phosphate is bound by residues K191, D244, S254, R255, and N256. K191 acts as the Proton acceptor in catalysis. Residue R255 participates in NADPH binding. Positions 279 and 281 each coordinate NADPH.

It belongs to the NAD-dependent glycerol-3-phosphate dehydrogenase family.

It localises to the cytoplasm. It carries out the reaction sn-glycerol 3-phosphate + NAD(+) = dihydroxyacetone phosphate + NADH + H(+). The catalysed reaction is sn-glycerol 3-phosphate + NADP(+) = dihydroxyacetone phosphate + NADPH + H(+). The protein operates within membrane lipid metabolism; glycerophospholipid metabolism. Its function is as follows. Catalyzes the reduction of the glycolytic intermediate dihydroxyacetone phosphate (DHAP) to sn-glycerol 3-phosphate (G3P), the key precursor for phospholipid synthesis. The chain is Glycerol-3-phosphate dehydrogenase [NAD(P)+] from Ectopseudomonas mendocina (strain ymp) (Pseudomonas mendocina).